The sequence spans 2467 residues: MKVTVDVEADSPFLKALQKAFPAFEVESQQVTPNDHANARAFSHLATKLIEQEVPTGVTILDVGSAPARRLMSDHTYHCICPMKSAEDPERLANYARKLAKASGTVLDKNVSGKITDLQDVMATPDLESPTFCLHTDETCRTRAEVAVYQDVYAVHAPTSLYHQAIKGVRTAYWIGFDTTPFMFEALAGAYPAYSTNWADEQVLQARNIGLCATGLSEGRRGKLSIMRKKCLRPSDRVMFSVGSTLYTESRKLLRSWHLPSVFHLKGKNSFTCRCDTVVSCEGYVVKKITISPGIYGKTVDYAVTHHAEGFLVCKITDTVRGERVSFPVCTYVPATICDQMTGILATDVTPEDAQKLLVGLNQRIVVNGRTQRNTNTMKNYLLPVVAQAFSKWAREARADMEDEKPLGTRERTLTCCCLWAFKSHKIHTMYKRPETQTIVKVPSTFDSFVIPSLWSSSLSMGIRQRIKLLLSARMAQGLPYSGDRTEARAAEEEEKEAQEAELTRAALPPLVSGSCADDIAQVDVEELTFRAGAGVVETPRNALKVTPQAHDHLIGSYLILSPQTVLKSEKLAPIHPLAEQVTVMTHSGRSGRYPVDKYDGRVLIPTGAAIPVSEFQALSESATMVYNEREFINRKLHHIALYGPALNTDEESYEKVRAERAETEYVFDVDKKACIKKEEASGLVLTGDLINPPFHEFAYEGLKIRPAAPYHTTIIGVFGVPGSGKSAIIKNMVTTRDLVASGKKENCQEIMNDVKRQRGLDVTARTVDSILLNGCKRGVENLYVDEAFACHSGTLLALIALVRPSGKVVLCGDPKQCGFFNLMQLKVHYNHNICTRVLHKSISRRCTLPVTAIVSTLHYQGKMRTTNRCNTPIQIDTTGSSKPASGDIVLTCFRGWVKQLQIDYRGHEVMTAAASQGLTRKGVYAVRQKVNENPLYSPLSEHVNVLLTRTENRLVWKTLSGDPWIKVLTNVPRGDFSATLEEWQEEHDGIMRVLNERPAEVDPFQNKAKVCWAKCLVQVLETAGIRMTADEWNTILAFREDRAYSPEVALNEICTRYYGVDLDSGLFSAQSVSLFYENNHWDNRPGGRMYGFNHEVARKYAARFPFLRGNMNSGLQLNVPERKLQPFSAECNIVPSNRRLPHALVTSYQQCRGERVEWLLKKIPGHQMLLVSEYNLAIPHKRVFWIAPPRVSGADRTYDLDLGLPMDAGRYDLVFVNIHTEYRQHHYQQCVDHSMRLQMLGGDSLHLLRPGGSLLMRAYGYADRVSEMVVTALARKFSAFRVLRPACVTSNTEVFLLFSNFDNGRRAVTLHQANQKLSSMYACNGLHTAGCAPSYRVRRADISGHGEEAVVNAANAKGTVSDGVCRAVAKKWPSSFKGAATPVGTAKMIRADGMTVIHAVGPNFSTVTEAEGDRELAAAYRAVASIISTNNIKSVAVPLLSTGTFSGGKDRVMQSLNHLFTALDATDADVVIYCRDKNWEKKIQEAIDRRTAIELVSEDVTLETDLVRVHPDSCLVGRNGYSATDGKLYSYLEGTRFHQTAVDMAEISTLWPRLQDANEQICLYALGETMDSIRTKCPVEDADSSTPPKTVPCLCRYAMTAERVARLRMNNTKNIIVCSSFPLPKYRIEGVQKVKCDRVLIFDQTVPSLVSPRKYIQQPPEQLDNVSLTSTTSTGSAWSLPSETTYETMEVVAEVHTEPPIPPPRRRRAAVAQLRQDLEVTEEIEPYVIQQAEIMVMERVATTDIRAIPVPARRAITMPVPAPRVRKVATEPPSEPEAPIPAPRKRRTTSTTPPHNPGDFVPRVPVELPWEPEDLDIQFGDLEPRRRNTRDWDVSTGIQFGDIDFNQSXLGRAGAYIFSSDTGPGHLQQRSVRQHELPCETLYAHEDERIYPPAFDGEKEKILQAKMQMAPTEANKSRYQSRKVENMKALIVERLREGAKLYLHEQTDKVPTYTSKYPRPVYSPSVDDSLSNPEVAVAACNSFLEENYPTVANYQITDEYDAYLDLVDGSESCLDRATFCPAKLRCYPKHHAYHQPQIRSAVPSPFQNTLQNVLAAATKRNCNVTQMRELPTMDSAVFNVESFKKYACTGEYWQEFKDNPIRITTENITTYVAKLKGPKAAALFAKTHNLVPLQEVPMDRFVMDMKRDVKVTPGTKHTEERPKVQVIQAAEPLATAYLCGIHRELVRRLKAVLTPNIHTLFDMSAEDFDAIIAAHFQPGDAVLETDIASFDKSQDDSLALTALMLLEDLGVDQELLDLIEAAFGEITSVHLPTGTRFKFGAMMKSGMFLTLFINTLLNIVIACRVLRDKLSSSACAAFIGDDNIVHGVRSDPLMAERCASWVNMEVKIIDATMCEKPPYFCGGFILYDSVAGTACRVADPLKRLFKLGKPLPADDNQDEDRRRALKDETVKWSRIGLREELDVALSSRYQVSGVGNITRAMSTLSKNLKSFRKIRGPIIHLYGGPK.

The 232-residue stretch at 27–258 (ESQQVTPNDH…ESRKLLRSWH (232 aa)) folds into the Alphavirus-like MT domain. Residues 243 to 262 (GSTLYTESRKLLRSWHLPSV) form a nsP1 membrane-binding region. Residues Cys416 and Cys418 are each lipidated (S-palmitoyl cysteine; by host). Residues 689 to 841 (DLINPPFHEF…HNICTRVLHK (153 aa)) enclose the (+)RNA virus helicase ATP-binding domain. 720 to 727 (GVPGSGKS) contacts a ribonucleoside 5'-triphosphate. In terms of domain architecture, (+)RNA virus helicase C-terminal spans 842 to 990 (SISRRCTLPV…LEEWQEEHDG (149 aa)). A Peptidase C9 domain is found at 1003-1325 (DPFQNKAKVC…QKLSSMYACN (323 aa)). The interval 1004–1023 (PFQNKAKVCWAKCLVQVLET) is nucleolus localization signal. Residue Cys1012 is the For cysteine protease nsP2 activity of the active site. Residues 1056-1065 (TRYYGVDLDS) carry the Nuclear export signal motif. Catalysis depends on His1081, which acts as the For cysteine protease nsP2 activity. Positions 1180-1184 (PHKRV) match the Nuclear localization signal motif. Positions 1332-1492 (CAPSYRVRRA…KIQEAIDRRT (161 aa)) constitute a Macro domain. Residues Asp1342, Asn1356, Gly1364, Gly1444, and Phe1446 each coordinate ADP-D-ribose. Zn(2+) is bound by residues Cys1594, Cys1596, Cys1619, and Cys1637. The segment at 1766–1803 (VRKVATEPPSEPEAPIPAPRKRRTTSTTPPHNPGDFVP) is disordered. Over residues 1774-1783 (PSEPEAPIPA) the composition is skewed to pro residues. Short sequence motifs (FGDF; binding to host G3BP1) lie at residues 1820 to 1823 (FGDL) and 1841 to 1844 (FGDI). The RdRp catalytic domain maps to 2222–2337 (AVLETDIASF…GVRSDPLMAE (116 aa)).

Interacts with non-structural protein 3. Interacts with RNA-directed RNA polymerase nsP4. Interacts with protease nsP2. interacts with itself. In terms of assembly, interacts with mRNA-capping enzyme nsP1. Interacts with host DDX1. Interacts with host DDX3. Interacts (via C-terminus) with host G3BP1; this interaction inhibits the formation of host stress granules on viral mRNAs and the nsp3-G3BP1 complexes bind viral RNAs and probably orchestrate the assembly of viral replication complexes. Interacts (via C-terminus) with host G3BP2; this interaction inhibits the formation of host stress granules on viral mRNAs and the nsp3-G3BP2 complexes bind viral RNAs and probably orchestrate the assembly of viral replication complexes. As to quaternary structure, interacts with mRNA-capping enzyme nsP1. Interacts with protease nsP2. interacts with itself. Interacts with RNA-directed RNA polymerase nsP4. Interacts with mRNA-capping enzyme nsP1. Interacts with KPNA1/karyopherin-alpha1; this interaction probably allows the active transport of protease nsP2 into the host nucleus. Mg(2+) is required as a cofactor. Requires Mn(2+) as cofactor. In terms of processing, specific enzymatic cleavages in vivo yield mature proteins. The processing of the polyprotein is temporally regulated. In early stages (1.7 hpi), P1234 is first cleaved in trans through its nsP2 protease activity, releasing P123' and nsP4, which associate to form the early replication complex. At the same time, P1234 is also cut at the nsP1/nsP2 site early in infection but with lower efficiency. After replication of the viral minus-strand RNAs (4 hpi), the polyproteins are cut at the nsP1/nsP2 and nsP2/nsP3 sites very efficiently, preventing accumulation of P123' and P1234 and allowing the formation of the late replication complex. NsP3'/nsP4 site is not cleaved anymore and P34 is produced rather than nsP4. Post-translationally, specific enzymatic cleavages in vivo yield mature proteins. The processing of the polyprotein is temporally regulated. In early stages (1.7 hpi), P123 is cleaved at the nsP1/nsP2 site with low efficiency. After replication of the viral minus-strand RNAs (4 hpi), the polyproteins are cut at the nsP1/nsP2 and nsP2/nsP3 sites very efficiently, preventing accumulation of P123 and allowing the formation of the late replication complex. Specific enzymatic cleavages in vivo yield mature proteins. The processing of the polyprotein is temporally regulated. In early stages (1.7 hpi), P123' is cleaved at the nsP1/nsP2 site with low efficiency. After replication of the viral minus-strand RNAs (4 hpi), the polyproteins are cut at the nsP1/nsP2 and nsP2/nsP3 sites very efficiently, preventing accumulation of P123' and allowing the formation of the late replication complex. In terms of processing, palmitoylated by host palmitoyltransferases ZDHHC2 and ZDHHC19. Post-translationally, phosphorylated by host on serines and threonines. Ubiquitinated; targets the protein for rapid degradation via the ubiquitin system. Nsp4 is present in extremely low quantities due to low frequency of translation through the amber stop-codon and the degradation by the ubiquitin pathway.

It localises to the host cytoplasmic vesicle membrane. The protein localises to the host cell membrane. Its subcellular location is the host cell projection. It is found in the host filopodium. The protein resides in the host nucleus. It localises to the host cytoplasm. The catalysed reaction is GTP + S-adenosyl-L-methionine = N(7)-methyl-GTP + S-adenosyl-L-homocysteine. It carries out the reaction N(7)-methyl-GTP + L-histidyl-[protein] = N(tele)-(N(7)-methylguanosine 5'-phospho)-L-histidyl-[protein] + diphosphate. The enzyme catalyses N(tele)-(N(7)-methylguanosine 5'-phospho)-L-histidyl-[protein] + a 5'-end diphospho-(purine-ribonucleoside) in mRNA + H(+) = a 5'-end (N(7)-methyl 5'-triphosphoguanosine)-(purine-ribonucleoside) in mRNA + L-histidyl-[protein]. It catalyses the reaction a 5'-end triphospho-ribonucleoside in mRNA + H2O = a 5'-end diphospho-ribonucleoside in mRNA + phosphate + H(+). The catalysed reaction is a ribonucleoside 5'-triphosphate + H2O = a ribonucleoside 5'-diphosphate + phosphate + H(+). It carries out the reaction ATP + H2O = ADP + phosphate + H(+). The enzyme catalyses RNA(n) + a ribonucleoside 5'-triphosphate = RNA(n+1) + diphosphate. It catalyses the reaction RNA(n) + ATP = RNA(n)-3'-adenine ribonucleotide + diphosphate. The catalysed reaction is 4-O-(ADP-D-ribosyl)-L-aspartyl-[protein] + H2O = L-aspartyl-[protein] + ADP-D-ribose + H(+). It carries out the reaction 5-O-(ADP-D-ribosyl)-L-glutamyl-[protein] + H2O = L-glutamyl-[protein] + ADP-D-ribose + H(+). The enzyme catalyses ADP-alpha-D-ribose 1''-phosphate + H2O = ADP-D-ribose + phosphate. Its function is as follows. Inactive precursor of the viral replicase, which is activated by cleavages carried out by the viral protease nsP2. Functionally, the early replication complex formed by the polyprotein P123 and nsP4 synthesizes minus-strand RNAs. As soon P123 is cleaved into mature proteins, the plus-strand RNAs synthesis begins. In terms of biological role, the early replication complex formed by the polyprotein P123' and nsP4 synthesizes minus-strand RNAs. Polyprotein P123' is a short-lived polyprotein that accumulates during early stage of infection. As soon P123' is cleaved into mature proteins, the plus-strand RNAs synthesis begins. Cytoplasmic capping enzyme that catalyzes two virus-specific reactions: methyltransferase and nsP1 guanylyltransferase. mRNA-capping is necessary since all viral RNAs are synthesized in the cytoplasm, and host capping enzymes are restricted to the nucleus. The enzymatic reaction involves a covalent link between 7-methyl-GMP and nsP1, whereas eukaryotic capping enzymes form a covalent complex only with GMP. nsP1 capping consists in the following reactions: GTP is first methylated into 7-methyl-GMP and then is covalently linked to nsP1 to form the m7GMp-nsP1 complex from which 7-methyl-GMP complex is transferred to the mRNA to create the cap structure. NsP1 is needed for the initiation of the minus-strand RNAs synthesis. Probably serves as a membrane anchor for the replication complex composed of nsP1-nsP4. Palmitoylated nsP1 is remodeling host cell cytoskeleton, and induces filopodium-like structure formation at the surface of the host cell. Its function is as follows. Multifunctional protein whose N-terminus is part of the RNA polymerase complex and displays NTPase, RNA triphosphatase and helicase activities. NTPase and RNA triphosphatase are involved in viral RNA capping and helicase keeps a check on the dsRNA replication intermediates. The C-terminus harbors a protease that specifically cleaves the polyproteins and releases the mature proteins. Required for the shutoff of minus-strand RNAs synthesis. Specifically inhibits the host IFN response by promoting the nuclear export of host STAT1. Also inhibits host transcription by inducing rapid proteasome-dependent degradation of POLR2A, a catalytic subunit of the RNAPII complex. The resulting inhibition of cellular protein synthesis serves to ensure maximal viral gene expression and to evade host immune response. Functionally, seems to be essential for minus-strand RNAs and subgenomic 26S mRNAs synthesis. Displays mono-ADP-ribosylhydrolase activity. ADP-ribosylation is a post-translational modification that controls various processes of the host cell and the virus probably needs to revert it for optimal viral replication. Binds proteins of FXR family and sequesters them into the viral RNA replication complexes thereby inhibiting the formation of host stress granules on viral mRNAs. The nsp3'-FXR complexes bind viral RNAs and probably orchestrate the assembly of viral replication complexes, thanks to the ability of FXR family members to self-assemble and bind DNA. In terms of biological role, seems to be essential for minus-strand RNAs and subgenomic 26S mRNAs synthesis. Displays mono-ADP-ribosylhydrolase activity. ADP-ribosylation is a post-translantional modification that controls various processes of the host cell and the virus probably needs to revert it for optimal viral replication. Binds proteins of G3BP family and sequesters them into the viral RNA replication complexes thereby inhibiting the formation of host stress granules on viral mRNAs. The nsp3-G3BP complexes bind viral RNAs and probably orchestrate the assembly of viral replication complexes, thanks to the ability of G3BP family members to self-assemble and bind DNA. RNA dependent RNA polymerase. Replicates genomic and antigenomic RNA by recognizing replications specific signals. The early replication complex formed by the polyprotein P123 and nsP4 synthesizes minus-strand RNAs. The late replication complex composed of fully processed nsP1-nsP4 is responsible for the production of genomic and subgenomic plus-strand RNAs. The core catalytic domain of nsP4 also possesses terminal adenylyltransferase (TATase) activity that is probably involved in maintenance and repair of the poly(A) tail, an element required for replication of the viral genome. The chain is Polyprotein P1234 from Sagiyama virus (SAGV).